The following is a 269-amino-acid chain: uncharacterized protein (269 aa).

The protein belongs to the methyltransferase superfamily.

This is an uncharacterized protein from Mycobacterium leprae (strain Br4923).